A 186-amino-acid chain; its full sequence is NADH-quinone oxidoreductase subunit B (186 aa).

4 residues coordinate [4Fe-4S] cluster: cysteine 44, cysteine 45, cysteine 110, and cysteine 139.

The protein belongs to the complex I 20 kDa subunit family. NDH-1 is composed of 14 different subunits. Subunits NuoB, C, D, E, F, and G constitute the peripheral sector of the complex. The cofactor is [4Fe-4S] cluster.

The protein resides in the cell inner membrane. The enzyme catalyses a quinone + NADH + 5 H(+)(in) = a quinol + NAD(+) + 4 H(+)(out). Its function is as follows. NDH-1 shuttles electrons from NADH, via FMN and iron-sulfur (Fe-S) centers, to quinones in the respiratory chain. The immediate electron acceptor for the enzyme in this species is believed to be ubiquinone. Couples the redox reaction to proton translocation (for every two electrons transferred, four hydrogen ions are translocated across the cytoplasmic membrane), and thus conserves the redox energy in a proton gradient. This is NADH-quinone oxidoreductase subunit B from Leptospira borgpetersenii serovar Hardjo-bovis (strain JB197).